The sequence spans 500 residues: Guanosine-5'-triphosphate,3'-diphosphate pyrophosphatase (500 aa).

Belongs to the GppA/Ppx family. GppA subfamily.

The catalysed reaction is guanosine 3'-diphosphate 5'-triphosphate + H2O = guanosine 3',5'-bis(diphosphate) + phosphate + H(+). The protein operates within purine metabolism; ppGpp biosynthesis; ppGpp from GTP: step 2/2. Catalyzes the conversion of pppGpp to ppGpp. Guanosine pentaphosphate (pppGpp) is a cytoplasmic signaling molecule which together with ppGpp controls the 'stringent response', an adaptive process that allows bacteria to respond to amino acid starvation, resulting in the coordinated regulation of numerous cellular activities. This Photorhabdus laumondii subsp. laumondii (strain DSM 15139 / CIP 105565 / TT01) (Photorhabdus luminescens subsp. laumondii) protein is Guanosine-5'-triphosphate,3'-diphosphate pyrophosphatase.